The following is a 278-amino-acid chain: 4-deoxy-L-threo-5-hexosulose-uronate ketol-isomerase (278 aa).

Residues H196, H198, E203, and H245 each coordinate Zn(2+).

It belongs to the KduI family. As to quaternary structure, homohexamer. Zn(2+) serves as cofactor.

The enzyme catalyses 5-dehydro-4-deoxy-D-glucuronate = 3-deoxy-D-glycero-2,5-hexodiulosonate. It functions in the pathway glycan metabolism; pectin degradation; 2-dehydro-3-deoxy-D-gluconate from pectin: step 4/5. Its function is as follows. Catalyzes the isomerization of 5-dehydro-4-deoxy-D-glucuronate to 3-deoxy-D-glycero-2,5-hexodiulosonate. This Escherichia coli O127:H6 (strain E2348/69 / EPEC) protein is 4-deoxy-L-threo-5-hexosulose-uronate ketol-isomerase.